The following is a 519-amino-acid chain: Lysine 5,6-aminomutase alpha subunit (519 aa).

57-59 (DEV) lines the adenosylcob(III)alamin pocket. Residues 187 to 192 (RTTGQS), serine 241, tyrosine 266, arginine 271, and asparagine 302 contribute to the pyridoxal 5'-phosphate site.

Belongs to the KamD family. As to quaternary structure, heterotetramer of 2 alpha and 2 beta subunits. Adenosylcob(III)alamin is required as a cofactor. Pyridoxal 5'-phosphate serves as cofactor.

It carries out the reaction (3S)-3,6-diaminohexanoate = (3S,5S)-3,5-diaminohexanoate. The enzyme catalyses D-lysine = (2R,5S)-2,5-diaminohexanoate. Its pathway is amino-acid metabolism; lysine degradation. With respect to regulation, rapidly inactivated in the presence of D-lysine and to a lesser extent in the absence of adenosylcobalamin (Adocbl). Activity is stable in the presence of Adocbl when D-lysine is absent. Adocbl imparts thermal stability at 37 degrees Celsius. Catalyzes the migration of the L-beta-lysine and D-lysine epsilon amino group to the delta carbon to produce 3,5-diaminohexanoate and 2,5-diaminohexanoate, respectively. The polypeptide is Lysine 5,6-aminomutase alpha subunit (kamD) (Acetoanaerobium sticklandii (strain ATCC 12662 / DSM 519 / JCM 1433 / CCUG 9281 / NCIMB 10654 / HF) (Clostridium sticklandii)).